The chain runs to 317 residues: Transaldolase (317 aa).

Catalysis depends on lysine 132, which acts as the Schiff-base intermediate with substrate.

It belongs to the transaldolase family. Type 1 subfamily. In terms of assembly, homodimer.

The protein resides in the cytoplasm. The catalysed reaction is D-sedoheptulose 7-phosphate + D-glyceraldehyde 3-phosphate = D-erythrose 4-phosphate + beta-D-fructose 6-phosphate. It functions in the pathway carbohydrate degradation; pentose phosphate pathway; D-glyceraldehyde 3-phosphate and beta-D-fructose 6-phosphate from D-ribose 5-phosphate and D-xylulose 5-phosphate (non-oxidative stage): step 2/3. Its function is as follows. Transaldolase is important for the balance of metabolites in the pentose-phosphate pathway. This chain is Transaldolase, found in Photorhabdus laumondii subsp. laumondii (strain DSM 15139 / CIP 105565 / TT01) (Photorhabdus luminescens subsp. laumondii).